The following is a 472-amino-acid chain: Ribulose bisphosphate carboxylase/oxygenase activase, chloroplastic (472 aa).

A chloroplast-targeting transit peptide spans M1 to A58. Residue G163–S170 coordinates ATP. The disordered stretch occupies residues G448–L472. The segment covering P452 to D465 has biased composition (basic and acidic residues).

Belongs to the RuBisCO activase family.

The protein localises to the plastid. Its subcellular location is the chloroplast stroma. Its function is as follows. Activation of RuBisCO (ribulose-1,5-bisphosphate carboxylase/oxygenase; EC 4.1.1.39) involves the ATP-dependent carboxylation of the epsilon-amino group of lysine leading to a carbamate structure. The protein is Ribulose bisphosphate carboxylase/oxygenase activase, chloroplastic of Spinacia oleracea (Spinach).